Here is a 183-residue protein sequence, read N- to C-terminus: Ubiquitin-conjugating enzyme E2 6 (183 aa).

Residues 1 to 148 (MASPSKRREM…VKEYCEKYAK (148 aa)) enclose the UBC core domain. Residue Cys-85 is the Glycyl thioester intermediate of the active site. A disordered region spans residues 148 to 183 (KPEEILSDDDDDDSMSEDGSDSDDDDDDEIVGKADP). Over residues 152-176 (ILSDDDDDDSMSEDGSDSDDDDDDE) the composition is skewed to acidic residues.

This sequence belongs to the ubiquitin-conjugating enzyme family. In terms of tissue distribution, expressed in roots, petals, sepals and silique walls.

The catalysed reaction is S-ubiquitinyl-[E1 ubiquitin-activating enzyme]-L-cysteine + [E2 ubiquitin-conjugating enzyme]-L-cysteine = [E1 ubiquitin-activating enzyme]-L-cysteine + S-ubiquitinyl-[E2 ubiquitin-conjugating enzyme]-L-cysteine.. Its pathway is protein modification; protein ubiquitination. In terms of biological role, accepts the ubiquitin from the E1 complex and catalyzes its covalent attachment to other proteins. The chain is Ubiquitin-conjugating enzyme E2 6 (UBC6) from Arabidopsis thaliana (Mouse-ear cress).